A 508-amino-acid chain; its full sequence is Protein disulfide-isomerase (508 aa).

The first 17 residues, 1-17 (MLRRALLCLAVAALVRA), serve as a signal peptide directing secretion. The Thioredoxin 1 domain occupies 18–134 (DAPEEEDHVL…IVNWLKKRTG (117 aa)). Catalysis depends on nucleophile residues C53 and C56. C53 and C56 form a disulfide bridge. K200 is modified (N6-acetyllysine). N6-succinyllysine is present on residues K222 and K271. S331 is modified (phosphoserine). In terms of domain architecture, Thioredoxin 2 spans 349 to 475 (GKIKPHLMSQ…FKKFLESGGQ (127 aa)). S357 is subject to Phosphoserine; by FAM20C. Residues C397 and C400 each act as nucleophile in the active site. Residues C397 and C400 are joined by a disulfide bond. S427 carries the phosphoserine modification. The tract at residues 471-508 (ESGGQDGAGDDDDLEDLEEAEEPDMEEDDDQKAVKDEL) is disordered. The span at 478-500 (AGDDDDLEDLEEAEEPDMEEDDD) shows a compositional bias: acidic residues. Residues 505-508 (KDEL) carry the Prevents secretion from ER motif.

Belongs to the protein disulfide isomerase family. Heterodimer; heterodimerizes with the protein microsomal triglyceride transfer MTTP. Homodimer. Monomers and homotetramers may also occur. Interacts with P4HA2, forming a heterotetramer consisting of 2 alpha subunits (P4HA2) and 2 beta (P4HB), where P4HB plays the role of a structural subunit; this tetramer catalyzes the formation of 4-hydroxyproline in collagen. Also constitutes the structural subunit of the microsomal triacylglycerol transfer protein MTTP in mammalian cells. Stabilizes both enzymes and retain them in the ER without contributing to the catalytic activity. Binds UBQLN1. Interacts with ERO1B. Binds to CD4, and upon HIV-1 binding to the cell membrane, is part of a P4HB/PDI-CD4-CXCR4-gp120 complex. Interacts with ILDR2. Interacts with ERN1/IRE1A (via N-terminus); the interaction is enhanced by phosphorylation of P4HB by FAM20C in response to endoplasmic reticulum stress and results in attenuation of ERN1 activity. Post-translationally, phosphorylation of Ser-357 by FAM20C is induced by endoplasmic reticulum stress and results in a functional switch from oxidoreductase to molecular chaperone. It also promotes interaction with ERN1.

The protein localises to the endoplasmic reticulum. It localises to the endoplasmic reticulum lumen. It is found in the melanosome. The protein resides in the cell membrane. The catalysed reaction is Catalyzes the rearrangement of -S-S- bonds in proteins.. This multifunctional protein catalyzes the formation, breakage and rearrangement of disulfide bonds. At the cell surface, seems to act as a reductase that cleaves disulfide bonds of proteins attached to the cell. May therefore cause structural modifications of exofacial proteins. Inside the cell, seems to form/rearrange disulfide bonds of nascent proteins. At high concentrations and following phosphorylation by FAM20C, functions as a chaperone that inhibits aggregation of misfolded proteins. At low concentrations, facilitates aggregation (anti-chaperone activity). May be involved with other chaperones in the structural modification of the TG precursor in hormone biogenesis. Also acts as a structural subunit of various enzymes such as prolyl 4-hydroxylase and microsomal triacylglycerol transfer protein MTTP. Receptor for LGALS9; the interaction retains P4HB at the cell surface of Th2 T helper cells, increasing disulfide reductase activity at the plasma membrane, altering the plasma membrane redox state and enhancing cell migration. This chain is Protein disulfide-isomerase (P4HB), found in Homo sapiens (Human).